Consider the following 249-residue polypeptide: Proteasome activator complex subunit 1 (249 aa).

The segment at 60–102 (PLDIPVPDPVKEKEKEERKKQQEKEEKDEKKKGDEDDKGPPCG) is disordered. The segment covering 68–98 (PVKEKEKEERKKQQEKEEKDEKKKGDEDDKG) has biased composition (basic and acidic residues).

The protein belongs to the PA28 family. In terms of assembly, heterodimer of PSME1 and PSME2, which forms a hexameric ring. PSME1 can form homoheptamers.

In terms of biological role, implicated in immunoproteasome assembly and required for efficient antigen processing. The PA28 activator complex enhances the generation of class I binding peptides by altering the cleavage pattern of the proteasome. This is Proteasome activator complex subunit 1 (Psme1) from Rattus norvegicus (Rat).